The sequence spans 256 residues: Nuclear shuttle protein (256 aa).

The interval 18–50 is disordered; the sequence is VSRNQSSKRGTFVRRTDGKRRKGPSSKAHDEPK. The Bipartite nuclear localization signal signature appears at 21–42; it reads NQSSKRGTFVRRTDGKRRKGPS. A Nuclear localization signal motif is present at residues 81-96; that stretch reads VLGKIEPNRSRSYIKL. The interaction with Arabidopsis thaliana NSI protein stretch occupies residues 150–187; the sequence is EIFGARIHSHGNLAITPGLKDRYYVLHVLKRVLSVEKD.

This sequence belongs to the begomovirus nuclear shuttle protein family. In terms of assembly, binds to single-stranded and double-stranded viral DNA. Interacts with the host nuclear shuttle interacting (NSI) protein. This interaction may allow NSP to recruit NSI monomers to the viral genome and thus regulate nuclear export of viral genome by NSP.

The protein localises to the host nucleus. Its subcellular location is the host cytoplasm. It is found in the host cell membrane. In terms of biological role, binds to the genomic viral ssDNA, shuttles it into and out of the cell nucleus. Begomoviruses use 2 proteins to transport their DNA from cell to cell. The nuclear shuttle protein (NSP) shuttles it between nucleus and cytoplasm and the movement protein (MP) probably transports the DNA-NSP complex to the cell periphery and facilitates movement across the cell wall. The chain is Nuclear shuttle protein from Brassica oleracea (Wild cabbage).